A 142-amino-acid chain; its full sequence is Large ribosomal subunit protein uL13 (142 aa).

This sequence belongs to the universal ribosomal protein uL13 family. As to quaternary structure, part of the 50S ribosomal subunit.

In terms of biological role, this protein is one of the early assembly proteins of the 50S ribosomal subunit, although it is not seen to bind rRNA by itself. It is important during the early stages of 50S assembly. This Pseudomonas fluorescens (strain ATCC BAA-477 / NRRL B-23932 / Pf-5) protein is Large ribosomal subunit protein uL13.